Here is a 91-residue protein sequence, read N- to C-terminus: Heat shock protein 30E (91 aa).

The disordered stretch occupies residues 62-91; the sequence is RDQIRQPGAPESEGTSPNTGKDGKDPGNSL. The segment covering 82 to 91 has biased composition (basic and acidic residues); it reads KDGKDPGNSL.

The protein belongs to the small heat shock protein (HSP20) family.

This Xenopus laevis (African clawed frog) protein is Heat shock protein 30E (hsp30e).